Here is a 356-residue protein sequence, read N- to C-terminus: 45 kDa calcium-binding protein (356 aa).

The first 29 residues, 1-29, serve as a signal peptide directing secretion; sequence MMSRQAFLCSLGSLYLSLLFVFLLMDVYA. An N-linked (GlcNAc...) asparagine glycan is attached at Asn33. EF-hand domains are found at residues 92–127, 131–166, 227–262, 272–307, and 308–343; these read KNRKKLMVIFSKVDIDNDKKISAKEMQRWIMEKTDE, EAVEENKMHFRAVDPDGDGHVSWDEYKIKFLASKGL, MLKFMVKEIIRDLDQDGDKKLTLSEFISLPVGTVEN, WVKDRRKEFEDVIDANHDGIVTMEELEEYMDPMNEY, and NALNEAKQMIAVADENQNHHLELEEILKYSEYFTGS. Ca(2+) is bound by residues Asp105, Asp107, Asp109, Lys111, Glu116, Asp144, Asp146, Asp148, His150, Glu155, Asp240, Asp242, Asp244, Lys246, Glu251, Asp285, Asn287, Asp289, Glu296, Asp321, Asn323, Asn325, His327, and Glu332.

Belongs to the CREC family.

Its subcellular location is the golgi apparatus lumen. Functionally, may regulate calcium-dependent activities in the endoplasmic reticulum lumen or post-ER compartment. The protein is 45 kDa calcium-binding protein (SDF4) of Gallus gallus (Chicken).